Here is a 243-residue protein sequence, read N- to C-terminus: MEYKINPIYRRIMLKISGEALQGTENFGVDSSILDRMVLEIKELVNIGVQIGMIIGGGNLFRGSRLVQFGMNKVIGDHIGMLATIMNGLVMHNALHRVYVDSSVMSAIPLQGVCDNYNWMRAIDLLSNNKVVIFGAGTGNPFFTTDSAACLRGIEISANAVFKATKVDGVFAHDPIQYPNHNIALYEQLSYQDVLQRELKVMDLTAFALARDHNLPIHIFNINKVGALKRIIMGYREGTVITK.

Residue 15–18 (KISG) coordinates ATP. G57 serves as a coordination point for UMP. Residues G58 and R62 each contribute to the ATP site. Residues D77 and 138–145 (TGNPFFTT) contribute to the UMP site. Positions 165, 171, and 174 each coordinate ATP.

The protein belongs to the UMP kinase family. In terms of assembly, homohexamer.

Its subcellular location is the cytoplasm. It carries out the reaction UMP + ATP = UDP + ADP. It participates in pyrimidine metabolism; CTP biosynthesis via de novo pathway; UDP from UMP (UMPK route): step 1/1. With respect to regulation, inhibited by UTP. Its function is as follows. Catalyzes the reversible phosphorylation of UMP to UDP. In Blochmanniella floridana, this protein is Uridylate kinase.